Here is a 262-residue protein sequence, read N- to C-terminus: MRFGLNIDHIVTLREIRKTYEPEILEALFIAKNTHKVDLITIHLREDRRHIQNEDVLKLLEISPLPINIECSINAEITDFLCSLKNKPSKVTIVPENRNEVTTEGGLDCSLKGLGEVIRAYHNKGIEVSLFIDPLKDALHFAREHQVKQVEFHTGVYANLHNALYSNANNQIHAISVLKDKSPKELKEELHNAFLQLRRMSKEAFFMGITACAGHGLNYTNVKELLKIPSLRELNIGHSVVSKAVLVGLEKAILEMAQLIKR.

Asn-6 contacts 3-amino-2-oxopropyl phosphate. 1-deoxy-D-xylulose 5-phosphate is bound at residue 8–9 (DH). Arg-17 contributes to the 3-amino-2-oxopropyl phosphate binding site. The Proton acceptor role is filled by His-43. Arg-45 and His-50 together coordinate 1-deoxy-D-xylulose 5-phosphate. Glu-70 (proton acceptor) is an active-site residue. Thr-102 contributes to the 1-deoxy-D-xylulose 5-phosphate binding site. His-215 functions as the Proton donor in the catalytic mechanism. 3-amino-2-oxopropyl phosphate is bound by residues Gly-216 and 237–238 (GH).

This sequence belongs to the PNP synthase family. In terms of assembly, homooctamer; tetramer of dimers.

It is found in the cytoplasm. The catalysed reaction is 3-amino-2-oxopropyl phosphate + 1-deoxy-D-xylulose 5-phosphate = pyridoxine 5'-phosphate + phosphate + 2 H2O + H(+). Its pathway is cofactor biosynthesis; pyridoxine 5'-phosphate biosynthesis; pyridoxine 5'-phosphate from D-erythrose 4-phosphate: step 5/5. In terms of biological role, catalyzes the complicated ring closure reaction between the two acyclic compounds 1-deoxy-D-xylulose-5-phosphate (DXP) and 3-amino-2-oxopropyl phosphate (1-amino-acetone-3-phosphate or AAP) to form pyridoxine 5'-phosphate (PNP) and inorganic phosphate. The chain is Pyridoxine 5'-phosphate synthase from Helicobacter pylori (strain ATCC 700392 / 26695) (Campylobacter pylori).